The chain runs to 323 residues: Prostaglandin-E(2) 9-reductase (323 aa).

NADP(+) contacts are provided by residues 23–24 (TY) and D50. Substrate is bound at residue Y24. Y55 acts as the Proton donor in catalysis. Residue H117 coordinates substrate. Residues 166–167 (SN), Q190, 216–221 (YSALGS), and 270–280 (KSFTEKRIKEN) each bind NADP(+).

Belongs to the aldo/keto reductase family.

The protein localises to the cytoplasm. It catalyses the reaction prostaglandin F2alpha + NADP(+) = prostaglandin E2 + NADPH + H(+). The catalysed reaction is (17R,20S)-17,20-dihydroxypregn-4-en-3-one + NADP(+) = 17alpha-hydroxyprogesterone + NADPH + H(+). It carries out the reaction (17R,20S)-17,20-dihydroxypregn-4-en-3-one + NAD(+) = 17alpha-hydroxyprogesterone + NADH + H(+). Its function is as follows. Can convert prostaglandin E2 to prostaglandin F2-alpha. This chain is Prostaglandin-E(2) 9-reductase (AKR1C5), found in Oryctolagus cuniculus (Rabbit).